The sequence spans 52 residues: UPF0391 membrane protein Tgr7_2500 (52 aa).

A run of 2 helical transmembrane segments spans residues 4-24 (WALI…SGVA) and 29-49 (WIAQ…LLGG).

This sequence belongs to the UPF0391 family.

Its subcellular location is the cell membrane. This chain is UPF0391 membrane protein Tgr7_2500, found in Thioalkalivibrio sulfidiphilus (strain HL-EbGR7).